Consider the following 563-residue polypeptide: MESCLSVSSAPPPKKNIQEPVRPNANFHKSVWGDHFLKYASNPEQINDGVDKQHKQLKEELRKKLVVNVNIERAEEQLKLIDAIQRLGVAYHFRTEIASVLNNQLELWNNKVDDDDLYLTSLRFRLLRQQGYNVSCAVFEKFKNIDGRFNECLTDDVRGLLSLYESTHMRVHKEDILEEALEFTVAQLEQVIKSSLSDKVLLSQVVHALNIPIRKSLTRLEARYFISVYEQDKSCNETLLKFSKLDFNILQKLHQQEVADLTLWWKNLNVSEKVPYARDRLVECYFWALAEYFEPQYSRARKMSGKITALISLIDDTYDSYGTFEELALFTDAAQRWDINAIDQLPEYMRPIFRELIYLYNAMEEELLNDGISYRVEYAKQSVIQMITAYNDEAIWYHNNYVPTFEEYLKVALVSSGYRMLPTNSFVGMGKTEVPHQAFDWVSNNPLMVKASTIIARLDNDKVGHEHEQDRGHVASGVECYMKQHGATKEEAVVEFNKRISSAWKDINQECLHPLPVPMHLLERVLNLVRFVTLFYKNGDMYTNSNTHMKEFISSLLVESIPS.

The segment at 1–22 (MESCLSVSSAPPPKKNIQEPVR) is disordered. Mg(2+)-binding residues include Asp315, Asp319, and Glu468. Positions 315 to 319 (DDTYD) match the DDXXD motif motif.

This sequence belongs to the terpene synthase family. It depends on Mg(2+) as a cofactor. As to expression, predominantly expressed in root.

It carries out the reaction (2E,6E)-farnesyl diphosphate = germacrene C + diphosphate. The catalysed reaction is (2E,6E)-farnesyl diphosphate = (-)-germacrene D + diphosphate. In terms of biological role, mediates formation of germacrene C and germacrene D using farnesyl diphosphate as substrate. Can also catalyze formation of trace of germacrene B. In Valeriana officinalis (Valerian), this protein is Germacrene C/D synthase (TPS1).